The following is a 782-amino-acid chain: DNA repair and recombination protein RAD54-like (782 aa).

The span at 1 to 20 (MRRSLAPSQRGGQRLSSRND) shows a compositional bias: polar residues. Residues 1–28 (MRRSLAPSQRGGQRLSSRNDFTPPLLKK) form a disordered region. A required for chromatin remodeling, strand pairing activities and coupling of ATPase activity region spans residues 2 to 9 (RRSLAPSQ). Residue threonine 22 is modified to Phosphothreonine. Residues 168–343 (EGKRGNFNGC…FSLVNFVNPE (176 aa)) form the Helicase ATP-binding domain. ATP is bound at residue 181–188 (DEMGLGKT). The DEGH box signature appears at 294 to 297 (DEGH). The region spanning 501-658 (LLDFMLAAIR…NNESAEKHFT (158 aa)) is the Helicase C-terminal domain. Over residues 741 to 753 (SQKIETTPATETS) the composition is skewed to polar residues. Positions 741 to 782 (SQKIETTPATETSVEAKPEPERRKRPAMPLSDDSADEDFQGF) are disordered. Residues 773–782 (DSADEDFQGF) are compositionally biased toward acidic residues.

The protein belongs to the SNF2/RAD54 helicase family. In terms of assembly, interacts (via N-terminus) with spn-A/Rad51.

It localises to the nucleus. In terms of biological role, involved in mitotic DNA repair and meiotic recombination. Functions in the recombinational DNA repair pathway. Essential for interhomolog gene conversion (GC), but may have a less important role in intersister GC than spn-A/Rad51. In the presence of DNA, spn-A/Rad51 enhances the ATPase activity of okr/Rad54. The polypeptide is DNA repair and recombination protein RAD54-like (Drosophila pseudoobscura pseudoobscura (Fruit fly)).